Consider the following 345-residue polypeptide: Alpha-2-HS-glycoprotein (345 aa).

Residues 1–18 form the signal peptide; the sequence is MKSLVLLLCFAQLWGCQS. Positions 19–133 constitute a Cystatin fetuin-A-type 1 domain; the sequence is APQGTGLGFR…QFRVMHTQCH (115 aa). Intrachain disulfides connect Cys32-Cys336, Cys89-Cys100, Cys114-Cys132, Cys146-Cys149, Cys208-Cys219, and Cys230-Cys247. Asn99 is a glycosylation site (N-linked (GlcNAc...) asparagine). Ser134 is modified (phosphoserine). Phosphothreonine is present on Thr135. Ser138 is modified (phosphoserine). A Cystatin fetuin-A-type 2 domain is found at 144–250; the sequence is KLCPRCPLLT…EEVSVACKLF (107 aa). 2 N-linked (GlcNAc...) asparagine glycosylation sites follow: Asn156 and Asn176. Phosphoserine is present on residues Ser305, Ser309, Ser312, and Ser314. The segment at 312–334 is disordered; sequence SASGETLHSPKVGQPGAAGPVSP.

Belongs to the fetuin family. Phosphorylated by FAM20C in the extracellular medium. As to expression, liver is the major site of synthesis, but fetuin is also expressed in limb buds and other extrahepatic tissues during development.

The protein resides in the secreted. Functionally, probably involved in differentiation. Its function is as follows. (Microbial infection) Facilitates invasion of hepatocytes by Plasmodium berghei sporozoites. This is Alpha-2-HS-glycoprotein (Ahsg) from Mus musculus (Mouse).